The primary structure comprises 24 residues: 12 kDa protein (24 aa).

The polypeptide is 12 kDa protein (Mycolicibacterium smegmatis (Mycobacterium smegmatis)).